Here is a 365-residue protein sequence, read N- to C-terminus: 3-dehydroquinate synthase (365 aa).

Residues 69-74 (DGEAHK), 103-107 (GVIGD), 127-128 (TT), Lys-140, and Lys-149 each bind NAD(+). Zn(2+)-binding residues include Glu-182, His-245, and His-262.

The protein belongs to the sugar phosphate cyclases superfamily. Dehydroquinate synthase family. Requires Co(2+) as cofactor. The cofactor is Zn(2+). NAD(+) serves as cofactor.

It is found in the cytoplasm. The enzyme catalyses 7-phospho-2-dehydro-3-deoxy-D-arabino-heptonate = 3-dehydroquinate + phosphate. It functions in the pathway metabolic intermediate biosynthesis; chorismate biosynthesis; chorismate from D-erythrose 4-phosphate and phosphoenolpyruvate: step 2/7. Its function is as follows. Catalyzes the conversion of 3-deoxy-D-arabino-heptulosonate 7-phosphate (DAHP) to dehydroquinate (DHQ). This is 3-dehydroquinate synthase from Pseudomonas putida (strain ATCC 700007 / DSM 6899 / JCM 31910 / BCRC 17059 / LMG 24140 / F1).